The primary structure comprises 134 residues: Small ribosomal subunit protein uS8c (134 aa).

It belongs to the universal ribosomal protein uS8 family. Part of the 30S ribosomal subunit.

It is found in the plastid. The protein resides in the chloroplast. Functionally, one of the primary rRNA binding proteins, it binds directly to 16S rRNA central domain where it helps coordinate assembly of the platform of the 30S subunit. The sequence is that of Small ribosomal subunit protein uS8c (rps8) from Phaseolus angularis (Azuki bean).